The following is a 181-amino-acid chain: Major urinary protein 20 (181 aa).

The signal sequence occupies residues Met1–Ala19. An intrachain disulfide couples Cys83 to Cys176.

Belongs to the calycin superfamily. Lipocalin family. As to expression, detected in urine of males but absent from female urine (at protein level).

Its subcellular location is the secreted. Its function is as follows. Male pheromone which stimulates female sexual attraction to male urinary scent and promotes a strong learned attraction to the airborne urinary odor of an individual male. Promotes spatial learning by rapidly conditioning preference for its remembered location among females and competitor males so that animals prefer to spend time in the site even when scent is absent. In addition to promoting a rapid attraction response, also elicits ultrasonic vocalizations and urinary scent marking in females which do not occur immediately after exposure. Stimulates hippocampal neurogenesis and cell proliferation in the subventricular zone in females. Promotes male aggressive behavior. Response to Mup20 is mediated by a neural circuit extending from the accessory olfactory bulb to a subset of nitric oxidase synthase-expressing neurons in the medial amygdala. As well as acting as a pheromone itself, binds most of the male pheromone, 2-sec-butyl-4,5-dihydrothiazole, in urine and is responsible for its slow release from scent marks. In Mus musculus (Mouse), this protein is Major urinary protein 20.